The sequence spans 210 residues: ATP phosphoribosyltransferase (210 aa).

This sequence belongs to the ATP phosphoribosyltransferase family. Short subfamily. As to quaternary structure, heteromultimer composed of HisG and HisZ subunits.

The protein resides in the cytoplasm. The catalysed reaction is 1-(5-phospho-beta-D-ribosyl)-ATP + diphosphate = 5-phospho-alpha-D-ribose 1-diphosphate + ATP. It functions in the pathway amino-acid biosynthesis; L-histidine biosynthesis; L-histidine from 5-phospho-alpha-D-ribose 1-diphosphate: step 1/9. Catalyzes the condensation of ATP and 5-phosphoribose 1-diphosphate to form N'-(5'-phosphoribosyl)-ATP (PR-ATP). Has a crucial role in the pathway because the rate of histidine biosynthesis seems to be controlled primarily by regulation of HisG enzymatic activity. The polypeptide is ATP phosphoribosyltransferase (Caldanaerobacter subterraneus subsp. tengcongensis (strain DSM 15242 / JCM 11007 / NBRC 100824 / MB4) (Thermoanaerobacter tengcongensis)).